The chain runs to 83 residues: Large ribosomal subunit protein bL28 (83 aa).

Belongs to the bacterial ribosomal protein bL28 family.

The protein is Large ribosomal subunit protein bL28 of Amoebophilus asiaticus (strain 5a2).